Reading from the N-terminus, the 425-residue chain is Tyrosine--tRNA ligase (425 aa).

Position 37 (Tyr37) interacts with L-tyrosine. A 'HIGH' region motif is present at residues 42-51 (PTADSLHLGH). The L-tyrosine site is built by Tyr174 and Gln178. Residues 234 to 238 (KFGKS) carry the 'KMSKS' region motif. Lys237 is an ATP binding site. One can recognise an S4 RNA-binding domain in the interval 357 to 422 (DGLIDALAAS…RGKKLYALLV (66 aa)).

It belongs to the class-I aminoacyl-tRNA synthetase family. TyrS type 1 subfamily. In terms of assembly, homodimer.

It is found in the cytoplasm. It carries out the reaction tRNA(Tyr) + L-tyrosine + ATP = L-tyrosyl-tRNA(Tyr) + AMP + diphosphate + H(+). Catalyzes the attachment of tyrosine to tRNA(Tyr) in a two-step reaction: tyrosine is first activated by ATP to form Tyr-AMP and then transferred to the acceptor end of tRNA(Tyr). This Laribacter hongkongensis (strain HLHK9) protein is Tyrosine--tRNA ligase.